The following is a 418-amino-acid chain: L-rhamnose isomerase (418 aa).

Mn(2+) is bound by residues His-262, Asp-294, and Asp-296.

It belongs to the rhamnose isomerase family. In terms of assembly, homotetramer. It depends on Mn(2+) as a cofactor.

It localises to the cytoplasm. The enzyme catalyses L-rhamnopyranose = L-rhamnulose. It functions in the pathway carbohydrate degradation; L-rhamnose degradation; glycerone phosphate from L-rhamnose: step 1/3. Functionally, catalyzes the interconversion of L-rhamnose and L-rhamnulose. The chain is L-rhamnose isomerase from Yersinia pseudotuberculosis serotype IB (strain PB1/+).